A 369-amino-acid polypeptide reads, in one-letter code: Glutamate 5-kinase (369 aa).

Residue Lys-9 participates in ATP binding. Residues Ser-49, Asp-136, and Asn-148 each contribute to the substrate site. ATP contacts are provided by residues Thr-168–Asp-169 and Thr-210–Lys-216. Residues Gln-275 to Trp-355 form the PUA domain.

This sequence belongs to the glutamate 5-kinase family.

It is found in the cytoplasm. The enzyme catalyses L-glutamate + ATP = L-glutamyl 5-phosphate + ADP. Its pathway is amino-acid biosynthesis; L-proline biosynthesis; L-glutamate 5-semialdehyde from L-glutamate: step 1/2. Functionally, catalyzes the transfer of a phosphate group to glutamate to form L-glutamate 5-phosphate. The chain is Glutamate 5-kinase from Streptococcus gordonii (strain Challis / ATCC 35105 / BCRC 15272 / CH1 / DL1 / V288).